We begin with the raw amino-acid sequence, 555 residues long: CTP synthase (555 aa).

The amidoligase domain stretch occupies residues methionine 1–isoleucine 265. Residue serine 13 coordinates CTP. UTP is bound at residue serine 13. ATP-binding positions include serine 14 to isoleucine 19 and aspartate 71. 2 residues coordinate Mg(2+): aspartate 71 and glutamate 139. Residues aspartate 146 to glutamate 148, lysine 186 to glutamine 191, and lysine 222 each bind CTP. UTP is bound by residues lysine 186–glutamine 191 and lysine 222. The 252-residue stretch at threonine 290–alanine 541 folds into the Glutamine amidotransferase type-1 domain. Residue glycine 351 participates in L-glutamine binding. Cysteine 378 (nucleophile; for glutamine hydrolysis) is an active-site residue. Residues leucine 379 to glutamine 382, glutamate 402, and arginine 469 contribute to the L-glutamine site. Active-site residues include histidine 514 and glutamate 516.

The protein belongs to the CTP synthase family. As to quaternary structure, homotetramer.

It carries out the reaction UTP + L-glutamine + ATP + H2O = CTP + L-glutamate + ADP + phosphate + 2 H(+). The enzyme catalyses L-glutamine + H2O = L-glutamate + NH4(+). It catalyses the reaction UTP + NH4(+) + ATP = CTP + ADP + phosphate + 2 H(+). It participates in pyrimidine metabolism; CTP biosynthesis via de novo pathway; CTP from UDP: step 2/2. Its activity is regulated as follows. Allosterically activated by GTP, when glutamine is the substrate; GTP has no effect on the reaction when ammonia is the substrate. The allosteric effector GTP functions by stabilizing the protein conformation that binds the tetrahedral intermediate(s) formed during glutamine hydrolysis. Inhibited by the product CTP, via allosteric rather than competitive inhibition. Functionally, catalyzes the ATP-dependent amination of UTP to CTP with either L-glutamine or ammonia as the source of nitrogen. Regulates intracellular CTP levels through interactions with the four ribonucleotide triphosphates. In Coxiella burnetii (strain CbuG_Q212) (Coxiella burnetii (strain Q212)), this protein is CTP synthase.